We begin with the raw amino-acid sequence, 130 residues long: Bet1-like SNARE 1-2 (130 aa).

At 1-106 (MNFRRENRAS…EKKSNRKSCK (106 aa)) the chain is on the cytoplasmic side. In terms of domain architecture, t-SNARE coiled-coil homology spans 33-95 (AHDERDNDEA…SGTINRFKLV (63 aa)). Residues 40 to 82 (DEALENLQDRVSFLKRVTGDIHEEVENHNRLLDKVGNKMDSAR) adopt a coiled-coil conformation. The chain crosses the membrane as a helical; Anchor for type IV membrane protein span at residues 107-122 (LIAYFVLLFLIMYYLI). Topologically, residues 123–130 (RLLNYIKG) are vesicular.

This sequence belongs to the BET1 family.

It is found in the golgi apparatus membrane. The protein resides in the endoplasmic reticulum membrane. Its function is as follows. Required for vesicular transport from the ER to the Golgi complex. Functions as a SNARE associated with ER-derived vesicles. The sequence is that of Bet1-like SNARE 1-2 (BET12) from Arabidopsis thaliana (Mouse-ear cress).